We begin with the raw amino-acid sequence, 341 residues long: L-threonine 3-dehydrogenase (341 aa).

A Zn(2+)-binding site is contributed by Cys38. Catalysis depends on charge relay system residues Thr40 and His43. Zn(2+)-binding residues include His63, Glu64, Cys93, Cys96, Cys99, and Cys107. NAD(+) contacts are provided by residues Ile175, Asp195, Arg200, 262–264 (LGI), and 286–287 (IY).

The protein belongs to the zinc-containing alcohol dehydrogenase family. As to quaternary structure, homotetramer. It depends on Zn(2+) as a cofactor.

Its subcellular location is the cytoplasm. It catalyses the reaction L-threonine + NAD(+) = (2S)-2-amino-3-oxobutanoate + NADH + H(+). Its pathway is amino-acid degradation; L-threonine degradation via oxydo-reductase pathway; glycine from L-threonine: step 1/2. Functionally, catalyzes the NAD(+)-dependent oxidation of L-threonine to 2-amino-3-ketobutyrate. The sequence is that of L-threonine 3-dehydrogenase from Salmonella gallinarum (strain 287/91 / NCTC 13346).